We begin with the raw amino-acid sequence, 879 residues long: Alanine--tRNA ligase (879 aa).

Positions 566, 570, 668, and 672 each coordinate Zn(2+).

The protein belongs to the class-II aminoacyl-tRNA synthetase family. Zn(2+) is required as a cofactor.

The protein resides in the cytoplasm. The catalysed reaction is tRNA(Ala) + L-alanine + ATP = L-alanyl-tRNA(Ala) + AMP + diphosphate. Its function is as follows. Catalyzes the attachment of alanine to tRNA(Ala) in a two-step reaction: alanine is first activated by ATP to form Ala-AMP and then transferred to the acceptor end of tRNA(Ala). Also edits incorrectly charged Ser-tRNA(Ala) and Gly-tRNA(Ala) via its editing domain. The sequence is that of Alanine--tRNA ligase from Listeria monocytogenes serovar 1/2a (strain ATCC BAA-679 / EGD-e).